A 151-amino-acid chain; its full sequence is Ribosome-binding factor A (151 aa).

A disordered region spans residues 116–151; that stretch reads DAEVARAAANARPAGDPDPYREPRPADDDDEDDEDE. Positions 120–129 are enriched in low complexity; sequence ARAAANARPA. A compositionally biased stretch (acidic residues) spans 142-151; sequence DDDDEDDEDE.

Belongs to the RbfA family. Monomer. Binds 30S ribosomal subunits, but not 50S ribosomal subunits or 70S ribosomes.

The protein resides in the cytoplasm. In terms of biological role, one of several proteins that assist in the late maturation steps of the functional core of the 30S ribosomal subunit. Associates with free 30S ribosomal subunits (but not with 30S subunits that are part of 70S ribosomes or polysomes). Required for efficient processing of 16S rRNA. May interact with the 5'-terminal helix region of 16S rRNA. This chain is Ribosome-binding factor A, found in Thermobifida fusca (strain YX).